The following is a 290-amino-acid chain: Pyridoxal 5'-phosphate synthase subunit PdxS (290 aa).

Position 22 (aspartate 22) interacts with D-ribose 5-phosphate. Catalysis depends on lysine 79, which acts as the Schiff-base intermediate with D-ribose 5-phosphate. Glycine 151 is a D-ribose 5-phosphate binding site. Position 163 (arginine 163) interacts with D-glyceraldehyde 3-phosphate. D-ribose 5-phosphate is bound by residues glycine 212 and 233–234 (GS).

Belongs to the PdxS/SNZ family. In the presence of PdxT, forms a dodecamer of heterodimers.

The catalysed reaction is aldehydo-D-ribose 5-phosphate + D-glyceraldehyde 3-phosphate + L-glutamine = pyridoxal 5'-phosphate + L-glutamate + phosphate + 3 H2O + H(+). It functions in the pathway cofactor biosynthesis; pyridoxal 5'-phosphate biosynthesis. In terms of biological role, catalyzes the formation of pyridoxal 5'-phosphate from ribose 5-phosphate (RBP), glyceraldehyde 3-phosphate (G3P) and ammonia. The ammonia is provided by the PdxT subunit. Can also use ribulose 5-phosphate and dihydroxyacetone phosphate as substrates, resulting from enzyme-catalyzed isomerization of RBP and G3P, respectively. In Clostridium botulinum (strain Langeland / NCTC 10281 / Type F), this protein is Pyridoxal 5'-phosphate synthase subunit PdxS.